The sequence spans 257 residues: UPF0246 protein lpl1317 (257 aa).

The protein belongs to the UPF0246 family.

The protein is UPF0246 protein lpl1317 of Legionella pneumophila (strain Lens).